The sequence spans 280 residues: F420-dependent methylenetetrahydromethanopterin dehydrogenase (280 aa).

This sequence belongs to the MTD family.

It carries out the reaction 5,10-methylenetetrahydromethanopterin + oxidized coenzyme F420-(gamma-L-Glu)(n) + 2 H(+) = 5,10-methenyl-5,6,7,8-tetrahydromethanopterin + reduced coenzyme F420-(gamma-L-Glu)(n). The protein operates within one-carbon metabolism; methanogenesis from CO(2); 5,10-methylene-5,6,7,8-tetrahydromethanopterin from 5,10-methenyl-5,6,7,8-tetrahydromethanopterin (coenzyme F420 route): step 1/1. Functionally, catalyzes the reversible reduction of methenyl-H(4)MPT(+) to methylene-H(4)MPT. This is F420-dependent methylenetetrahydromethanopterin dehydrogenase from Methanoculleus marisnigri (strain ATCC 35101 / DSM 1498 / JR1).